Consider the following 790-residue polypeptide: Histone-lysine N-methyltransferase, H3 lysine-9 specific SUVH6 (790 aa).

The segment at 251-271 (QLRILGVGTSSGSSSGDSSRN) is disordered. The span at 256–268 (GVGTSSGSSSGDS) shows a compositional bias: low complexity. In terms of domain architecture, YDG spans 330 to 482 (GEVPGVEVGD…MNVFKFQLRR (153 aa)). A Pre-SET domain is found at 551-613 (KSCCCTTRCT…SCYLRVTQHG (63 aa)). Zn(2+) is bound by residues Cys-553, Cys-554, Cys-555, Cys-559, Cys-567, Cys-569, Cys-595, Cys-599, Cys-601, and Cys-605. Positions 616–760 (LPLEIFKTKS…PLQELCYDYN (145 aa)) constitute an SET domain. Residues 626 to 628 (RGW), Asp-662, Tyr-664, Arg-714, and 717 to 718 (NH) each bind S-adenosyl-L-methionine. Zn(2+)-binding residues include Cys-720, Cys-778, Cys-780, and Cys-785. Residues 774-790 (KQKPCFCGAAVCRRRLY) enclose the Post-SET domain.

Belongs to the class V-like SAM-binding methyltransferase superfamily. Histone-lysine methyltransferase family. Suvar3-9 subfamily.

It is found in the nucleus. The protein localises to the chromosome. Its subcellular location is the centromere. The enzyme catalyses N(6)-methyl-L-lysyl(9)-[histone H3] + S-adenosyl-L-methionine = N(6),N(6)-dimethyl-L-lysyl(9)-[histone H3] + S-adenosyl-L-homocysteine + H(+). The catalysed reaction is L-lysyl(9)-[histone H3] + S-adenosyl-L-methionine = N(6)-methyl-L-lysyl(9)-[histone H3] + S-adenosyl-L-homocysteine + H(+). Histone methyltransferase. Methylates 'Lys-9' of histone H3. H3 'Lys-9' methylation represents a specific tag for epigenetic transcriptional repression. Seems to act preferentially on dsMRNA. This Arabidopsis thaliana (Mouse-ear cress) protein is Histone-lysine N-methyltransferase, H3 lysine-9 specific SUVH6 (SUVH6).